The primary structure comprises 287 residues: IQ domain-containing protein K (287 aa).

This is IQ domain-containing protein K (IQCK) from Homo sapiens (Human).